The following is a 396-amino-acid chain: S100P-binding protein (396 aa).

A disordered region spans residues Cys145–Gly249. Basic and acidic residues-rich tracts occupy residues Val148–Glu161 and Glu168–Glu185. Composition is skewed to polar residues over residues Ser202–Asp215 and Val227–His246.

Interacts with S100P.

Its subcellular location is the nucleus. In Mus musculus (Mouse), this protein is S100P-binding protein.